The sequence spans 4383 residues: Replicase polyprotein 1a (4383 aa).

The region spanning 54 to 196 is the CoV Nsp1 globular domain; the sequence is PENHVMVDCR…PWVMYLRKRG (143 aa). Residues 216–246 enclose the BetaCoV Nsp1 C-terminal domain; it reads FKVEDAYDQVHDEPKGKFSKKAYALIRGYRG. The CoV Nsp2 N-terminal domain maps to 250-514; the sequence is LLYVDQYGCD…VKETNLICKA (265 aa). Zn(2+)-binding residues include Cys-392, Cys-397, Cys-413, and Cys-416. Residues 392 to 416 form a C4 region; the sequence is CEQDSCDFKGWIPGNMIDGFACTTC. Residues 524-713 enclose the CoV Nsp2 middle domain; it reads CGNLHQRELL…AQAFQSVAKV (190 aa). Residues 733–851 enclose the CoV Nsp2 C-terminal domain; that stretch reads RRRICLSGRK…LDQAWRVPCA (119 aa). One can recognise a Ubiquitin-like 1 domain in the interval 853–966; the sequence is RRVTFKEQPT…LYCAFTAPED (114 aa). The tract at residues 995-1025 is disordered; the sequence is PCVASEQEESSEVLEDTLDDGPSVETSDSQV. Acidic residues predominate over residues 1000–1013; it reads EQEESSEVLEDTLD. Residues 1036–1274 form the Peptidase C16 1 domain; the sequence is DLESVIQDYE…IAQLYGSCIT (239 aa). The For PL1-PRO activity role is filled by Cys-1074. 4 residues coordinate Zn(2+): Cys-1151, Cys-1154, Cys-1177, and Cys-1179. The segment at 1151–1179 adopts a C4-type 1 zinc-finger fold; that stretch reads CIKCDLALKLKGLDAMFFYGDVVSHICKC. Catalysis depends on for PL1-PRO activity residues His-1225 and Asp-1236. The 161-residue stretch at 1275–1435 folds into the Macro domain; the sequence is PNVCFVKGDI…LISKCQITAV (161 aa). A DPUP domain is found at 1491-1563; sequence DDARTFVQSN…VAQIKALFLD (73 aa). The Ubiquitin-like 2 domain maps to 1562-1617; sequence LDKVDILLTVDGVNFTNRFVPVGESFGKSLGNVFCDGVNVTKHKCDINYKGKVFFQ. Residues 1631-1892 form the Peptidase C16 2 domain; it reads SSFNFDQKEL…KIEYKPDLSQ (262 aa). The For PL2-PRO activity role is filled by Cys-1671. 4 residues coordinate Zn(2+): Cys-1749, Cys-1751, Cys-1783, and Cys-1785. The C4-type 2 zinc finger occupies 1749–1785; it reads CKCGVKQEQRTGLDAVMHFGTLSREDLEIGYTVDCSC. Active-site for PL2-PRO activity residues include His-1828 and Asp-1842. A Nucleic acid-binding domain is found at 1906-2007; it reads IKAQFKTFEK…TYFNRPLLVD (102 aa). Residues 2020-2169 enclose the G2M domain; the sequence is DDSGDSSESG…ADNKVIYTTE (150 aa). The next 3 membrane-spanning stretches (helical) occupy residues 2138–2158, 2199–2219, and 2221–2241; these read TSAC…WIKI, ACII…NVIF, and DFYL…AQWI. The tract at residues 2138 to 2385 is HD1; the sequence is TSACFNFIKW…ASFIKLFSLF (248 aa). The region spanning 2235–2296 is the 3Ecto domain; it reads GKIAQWIKNT…AIDVVQYEAD (62 aa). 2 disulfides stabilise this stretch: Cys-2251–Cys-2275 and Cys-2266–Cys-2272. A run of 3 helical transmembrane segments spans residues 2313–2333, 2343–2363, and 2365–2385; these read LIVS…LISI, LFML…ANML, and AHVF…FSLF. A Y1 region spans residues 2383-2473; the sequence is SLFKHVAYGC…ELKRPIQPTD (91 aa). The 368-residue stretch at 2383–2750 folds into the CoV Nsp3 Y domain; that stretch reads SLFKHVAYGC…LTTPFSLKGG (368 aa). Residues His-2387, Cys-2392, Cys-2397, Cys-2400, Cys-2433, His-2436, Cys-2440, and Cys-2443 each contribute to the Zn(2+) site. Residues 2387–2400 are ZF1; it reads HVAYGCSKSGCLFC. Residues 2433–2443 form a ZF2 region; the sequence is CSKHQWNCIDC. The interval 2474–2566 is Y2; it reads VAYHTVTDVK…MVDKNLITTA (93 aa). Positions 2474-2750 are coV-Y; the sequence is VAYHTVTDVK…LTTPFSLKGG (277 aa). Residues 2567–2649 are Y3; it reads NTGTSVTETM…DSVMSAVSAG (83 aa). A Y4 region spans residues 2650-2750; the sequence is LELTDESCNN…LTTPFSLKGG (101 aa). Transmembrane regions (helical) follow at residues 2752-2772, 2824-2844, 3009-3029, 3031-3051, 3063-3083, 3090-3110, and 3115-3135; these read VFSY…IGLW, STFG…VAVI, VFDL…FLAL, ASSI…YYLI, VVFV…VFQV, VYAI…SVIM, and LVMY…AVVV. The HD2 stretch occupies residues 2752–3135; the sequence is VFSYFVYVCF…FCLLYIAVVV (384 aa). The Nsp4C domain occupies 3149–3246; sequence LGTSVRSDGT…TASVSTSFLQ (98 aa). The Peptidase C30 domain occupies 3247–3549; that stretch reads SGIVKMVNPT…YQQLAGIKLQ (303 aa). Residues His-3287 and Cys-3391 each act as for 3CL-PRO activity in the active site. The tract at residues 3319–3775 is HD3; that stretch reads LSLTVMSYQM…IISCYWGLFS (457 aa). Transmembrane regions (helical) follow at residues 3558 to 3578, 3588 to 3608, 3615 to 3635, 3657 to 3677, 3684 to 3704, 3711 to 3731, and 3755 to 3775; these read GTVC…TAFV, TNMF…MLLV, LTMY…LVVY, TYTD…FVTL, LFSF…WYKG, ILLM…LSMA, and IVLL…GLFS. The region spanning 3837 to 3925 is the RdRp Nsp7 cofactor domain; that stretch reads SKLTDVKCAN…DYAKDNTVLQ (89 aa). The region spanning 3926-4122 is the RdRp Nsp8 cofactor domain; sequence ALQSEFVNMA…YNEVSATVLQ (197 aa). The region spanning 4123–4232 is the Nsp9 ssRNA-binding domain; sequence NNELMPAKLK…GTISSTVRLQ (110 aa). The 138-residue stretch at 4233–4370 folds into the ExoN/MTase coactivator domain; that stretch reads AGTATEYASN…CVSTDTTVQS (138 aa). Cys-4306, Cys-4309, His-4315, Cys-4322, Cys-4348, Cys-4351, Cys-4359, and Cys-4361 together coordinate Zn(2+). Zinc fingers lie at residues 4306-4322 and 4348-4361; these read CIYC…DGLC and CRVC…SCSC.

Belongs to the coronaviruses polyprotein 1ab family. 3CL-PRO exists as monomer and homodimer. Eight copies of nsp7 and eight copies of nsp8 assemble to form a heterohexadecamer. Nsp9 is a dimer. Nsp10 forms a dodecamer. Specific enzymatic cleavages in vivo by its own proteases yield mature proteins. 3CL-PRO and PL-PRO proteinases are autocatalytically processed.

It localises to the host membrane. The protein localises to the host cytoplasm. It is found in the host perinuclear region. The catalysed reaction is Thiol-dependent hydrolysis of ester, thioester, amide, peptide and isopeptide bonds formed by the C-terminal Gly of ubiquitin (a 76-residue protein attached to proteins as an intracellular targeting signal).. The enzyme catalyses TSAVLQ-|-SGFRK-NH2 and SGVTFQ-|-GKFKK the two peptides corresponding to the two self-cleavage sites of the SARS 3C-like proteinase are the two most reactive peptide substrates. The enzyme exhibits a strong preference for substrates containing Gln at P1 position and Leu at P2 position.. It catalyses the reaction a 5'-end diphospho-ribonucleoside in mRNA + GTP + H(+) = a 5'-end (5'-triphosphoguanosine)-ribonucleoside in mRNA + diphosphate. Its function is as follows. The papain-like proteinase 1 (PL1-PRO) and papain-like proteinase 2 (PL2-PRO) are responsible for the cleavages located at the N-terminus of the replicase polyprotein. In addition, PLP2 possesses a deubiquitinating/deISGylating activity and processes both 'Lys-48'- and 'Lys-63'-linked polyubiquitin chains from cellular substrates. Antagonizes innate immune induction of type I interferon by blocking the phosphorylation, dimerization and subsequent nuclear translocation of host IRF-3. Responsible for the majority of cleavages as it cleaves the C-terminus of replicase polyprotein at 11 sites. Recognizes substrates containing the core sequence [ILMVF]-Q-|-[SGACN]. Inhibited by the substrate-analog Cbz-Val-Asn-Ser-Thr-Leu-Gln-CMK. Also contains an ADP-ribose-1''-phosphate (ADRP)-binding function. Functionally, nsp7-nsp8 hexadecamer may possibly confer processivity to the polymerase, maybe by binding to dsRNA or by producing primers utilized by the latter. In terms of biological role, catalytic subunit of viral RNA capping enzyme which catalyzes the RNA guanylyltransferase reaction for genomic and sub-genomic RNAs. The kinase-like NiRAN domain of NSP12 transfers RNA to the amino terminus of NSP9, forming a covalent RNA-protein intermediate. Subsequently, the NiRAN domain transfers RNA to GDP, forming the core cap structure GpppA-RNA. The NSP14 and NSP16 methyltransferases then add methyl groups to form functional cap structures. Its function is as follows. Binds to the 40S ribosomal subunit and inhibits host translation. The nsp1-40S ribosome complex further induces an endonucleolytic cleavage near the 5'UTR of host mRNAs, targeting them for degradation. This inhibits the integrated stress response (ISR) in the infected cell by preventing EIF2S1/eIF2-alpha phosphorylation upstream of stress granule formation and depletes host G3BP1. By suppressing host gene expression, nsp1 facilitates efficient viral gene expression in infected cells and evasion from host immune response. The polypeptide is Replicase polyprotein 1a (Human coronavirus OC43 (HCoV-OC43)).